A 313-amino-acid chain; its full sequence is GTPase Era (313 aa).

An Era-type G domain is found at 13 to 186; sequence RSGFVSFVGR…ADLLVGLLPE (174 aa). Residues 21 to 28 are G1; sequence GRPNAGKS. 21 to 28 is a binding site for GTP; that stretch reads GRPNAGKS. Residues 47–51 are G2; it reads QTTRT. A G3 region spans residues 68–71; it reads DTPG. Residues 68–72 and 131–134 contribute to the GTP site; these read DTPGL and TKTD. The tract at residues 131–134 is G4; it reads TKTD. Positions 165–167 are G5; that stretch reads VSA. The KH type-2 domain maps to 217–299; the sequence is LRDELPHSVA…YLDLHVKIAK (83 aa).

This sequence belongs to the TRAFAC class TrmE-Era-EngA-EngB-Septin-like GTPase superfamily. Era GTPase family. As to quaternary structure, monomer.

The protein localises to the cytoplasm. It localises to the cell membrane. An essential GTPase that binds both GDP and GTP, with rapid nucleotide exchange. Plays a role in 16S rRNA processing and 30S ribosomal subunit biogenesis and possibly also in cell cycle regulation and energy metabolism. In Nocardioides sp. (strain ATCC BAA-499 / JS614), this protein is GTPase Era.